The primary structure comprises 183 residues: uncharacterized protein (183 aa).

It belongs to the EUO family.

This is an uncharacterized protein from Chlamydia trachomatis serovar D (strain ATCC VR-885 / DSM 19411 / UW-3/Cx).